Here is a 127-residue protein sequence, read N- to C-terminus: Aspartate 1-decarboxylase (127 aa).

The Schiff-base intermediate with substrate; via pyruvic acid role is filled by Ser25. At Ser25 the chain carries Pyruvic acid (Ser). Thr57 lines the substrate pocket. The active-site Proton donor is the Tyr58. 73–75 (GAA) serves as a coordination point for substrate.

The protein belongs to the PanD family. In terms of assembly, heterooctamer of four alpha and four beta subunits. The cofactor is pyruvate. Post-translationally, is synthesized initially as an inactive proenzyme, which is activated by self-cleavage at a specific serine bond to produce a beta-subunit with a hydroxyl group at its C-terminus and an alpha-subunit with a pyruvoyl group at its N-terminus.

It localises to the cytoplasm. It catalyses the reaction L-aspartate + H(+) = beta-alanine + CO2. It participates in cofactor biosynthesis; (R)-pantothenate biosynthesis; beta-alanine from L-aspartate: step 1/1. Its function is as follows. Catalyzes the pyruvoyl-dependent decarboxylation of aspartate to produce beta-alanine. This chain is Aspartate 1-decarboxylase, found in Staphylococcus aureus (strain JH1).